Here is a 261-residue protein sequence, read N- to C-terminus: Small ribosomal subunit protein uS2 (261 aa).

Belongs to the universal ribosomal protein uS2 family.

The protein is Small ribosomal subunit protein uS2 of Streptococcus mutans serotype c (strain ATCC 700610 / UA159).